The chain runs to 1030 residues: FACT complex subunit spt-16 (1030 aa).

Residues 424–445 adopt a coiled-coil conformation; sequence RLKSNVIKFKEEQENREAEKDN. Composition is skewed to basic and acidic residues over residues 435 to 449 and 464 to 477; these read EQEN…DQKK and TRNK…RKER. 2 disordered regions span residues 435–477 and 491–514; these read EQEN…RKER and ARLS…SYKT. The stretch at 623–645 forms a coiled coil; the sequence is RLIKEMQKRFKTEEAEEREKEGA. The segment at 927–1030 is disordered; the sequence is VESDNEEAMD…KSGPSHKRRK (104 aa). Acidic residues-rich tracts occupy residues 929–951 and 958–983; these read SDNE…EEDA and ESDE…DSDE. The stretch at 987 to 1007 forms a coiled coil; it reads KDWSDLEEEAANADKRREVEE. The segment covering 998–1014 has biased composition (basic and acidic residues); it reads NADKRREVEEPSRDRDR. Basic residues predominate over residues 1015-1030; the sequence is KRPHSSKSGPSHKRRK.

This sequence belongs to the peptidase M24 family. SPT16 subfamily. Component of the FACT complex, a stable heterodimer of spt-16 and hmg-3 or hmg-4. In terms of tissue distribution, expressed in the germline and somatic cells.

It is found in the nucleus. The protein localises to the chromosome. In terms of biological role, component of the FACT complex, a general chromatin factor that acts to reorganize nucleosomes. The FACT complex is involved in multiple processes that require DNA as a template such as mRNA elongation, DNA replication and DNA repair. During transcription elongation the FACT complex acts as a histone chaperone that both destabilizes and restores nucleosomal structure. It facilitates the passage of RNA polymerase II and transcription by promoting the dissociation of one histone H2A-H2B dimer from the nucleosome, then subsequently promotes the reestablishment of the nucleosome following the passage of RNA polymerase II. In embryos, promotes cell cycle progression and chromosomal segregation. Plays a role in the development of the anterior pharynx during embryonic development. The sequence is that of FACT complex subunit spt-16 from Caenorhabditis elegans.